A 179-amino-acid chain; its full sequence is Vi polysaccharide biosynthesis protein TviA (179 aa).

It participates in glycan metabolism; Vi-antigen biosynthesis. The protein operates within capsule biogenesis; capsule polysaccharide biosynthesis. The polypeptide is Vi polysaccharide biosynthesis protein TviA (tviA) (Salmonella typhi).